We begin with the raw amino-acid sequence, 176 residues long: Large ribosomal subunit protein uL22 (176 aa).

The disordered stretch occupies residues 113-176 (VVESRPSKDQ…EISEAKGGSD (64 aa)). Positions 136-152 (SKAAATAPAKKSSASKA) are enriched in low complexity. Positions 159–176 (TKAESKTSEISEAKGGSD) are enriched in basic and acidic residues.

Belongs to the universal ribosomal protein uL22 family. Part of the 50S ribosomal subunit.

Its function is as follows. This protein binds specifically to 23S rRNA; its binding is stimulated by other ribosomal proteins, e.g. L4, L17, and L20. It is important during the early stages of 50S assembly. It makes multiple contacts with different domains of the 23S rRNA in the assembled 50S subunit and ribosome. The globular domain of the protein is located near the polypeptide exit tunnel on the outside of the subunit, while an extended beta-hairpin is found that lines the wall of the exit tunnel in the center of the 70S ribosome. The sequence is that of Large ribosomal subunit protein uL22 from Mycobacterium ulcerans (strain Agy99).